The sequence spans 145 residues: MSMVSEFKKFALKGNVMDLAVGVIIGGAFATITKSLVEDVIMPIVAFIAGGEINFKNMFLILGDTPEGVVMTYDALKAAGVPVLAYGNFITVLINFLILAFIIFMMVKMVNRLRRADEVVEKIAGPSEEVQLLREISAKLGNINK.

The next 3 helical transmembrane spans lie at 10-30 (FALK…GAFA), 41-61 (IMPI…MFLI), and 87-107 (GNFI…FMMV).

This sequence belongs to the MscL family. As to quaternary structure, homopentamer.

It is found in the cell inner membrane. Channel that opens in response to stretch forces in the membrane lipid bilayer. May participate in the regulation of osmotic pressure changes within the cell. The chain is Large-conductance mechanosensitive channel from Psychrobacter arcticus (strain DSM 17307 / VKM B-2377 / 273-4).